The primary structure comprises 1412 residues: DNA-directed RNA polymerase subunit beta' (1412 aa).

Zn(2+) contacts are provided by C70, C72, C85, and C88. Positions 458, 460, and 462 each coordinate Mg(2+). C813, C887, C894, and C897 together coordinate Zn(2+). The tract at residues 1388 to 1412 (EQALLTPATTAEAVVGEEPAPPPAQ) is disordered. Over residues 1393–1405 (TPATTAEAVVGEE) the composition is skewed to low complexity.

This sequence belongs to the RNA polymerase beta' chain family. The RNAP catalytic core consists of 2 alpha, 1 beta, 1 beta' and 1 omega subunit. When a sigma factor is associated with the core the holoenzyme is formed, which can initiate transcription. Requires Mg(2+) as cofactor. Zn(2+) is required as a cofactor.

It carries out the reaction RNA(n) + a ribonucleoside 5'-triphosphate = RNA(n+1) + diphosphate. Its function is as follows. DNA-dependent RNA polymerase catalyzes the transcription of DNA into RNA using the four ribonucleoside triphosphates as substrates. This Methylibium petroleiphilum (strain ATCC BAA-1232 / LMG 22953 / PM1) protein is DNA-directed RNA polymerase subunit beta'.